Consider the following 470-residue polypeptide: Uronate isomerase (470 aa).

The protein belongs to the metallo-dependent hydrolases superfamily. Uronate isomerase family.

The enzyme catalyses D-glucuronate = D-fructuronate. It carries out the reaction aldehydo-D-galacturonate = keto-D-tagaturonate. The protein operates within carbohydrate metabolism; pentose and glucuronate interconversion. This chain is Uronate isomerase, found in Serratia proteamaculans (strain 568).